We begin with the raw amino-acid sequence, 647 residues long: Protein cueball (647 aa).

The signal sequence occupies residues 1–22 (MLWCPSVLVPLIAVAACLPVLA). Topologically, residues 23–534 (IGTPLEWEFA…CMTPSPWTSN (512 aa)) are extracellular. 2 N-linked (GlcNAc...) asparagine glycosylation sites follow: Asn80 and Asn106. LDL-receptor class B repeat units lie at residues 119 to 166 (RNLF…DVCR), 167 to 211 (RKLY…DQLS), and 212 to 257 (DRIF…TNDA). A glycan (N-linked (GlcNAc...) asparagine) is linked at Asn175. N-linked (GlcNAc...) asparagine glycosylation is present at Asn316. 2 consecutive EGF-like domains span residues 365 to 401 (DEKT…SRCE) and 436 to 473 (EISK…ERCE). 5 disulfides stabilise this stretch: Cys376/Cys389, Cys391/Cys400, Cys440/Cys450, Cys444/Cys461, and Cys463/Cys472. Asn475 carries N-linked (GlcNAc...) asparagine glycosylation. Residues 535-555 (VIIVLVLGIVSCFFLVAVIVH) form a helical membrane-spanning segment. Topologically, residues 556-647 (GFRRLYKPKR…LIHNMDDDLY (92 aa)) are cytoplasmic.

This sequence belongs to the cueball family.

The protein resides in the cell membrane. Has a role in spermatogenesis and oogenesis. In Drosophila pseudoobscura pseudoobscura (Fruit fly), this protein is Protein cueball.